We begin with the raw amino-acid sequence, 2233 residues long: MSEESLFESSPQKMEYEITNYSERHTELPGHFIGLNTVDKLEESPLRDFVKSHGGHTVISKILIANNGIAAVKEIRSVRKWAYETFGDDRTVQFVAMATPEDLEANAEYIRMADQYIEVPGGTNNNNYANVDLIVDIAERADVDAVWAGWGHASENPLLPEKLSQSKRKVIFIGPPGNAMRSLGDKISSTIVAQSAKVPCIPWSGTGVDTVHVDEKTGLVSVDDDIYQKGCCTSPEDGLQKAKRIGFPVMIKASEGGGGKGIRQVEREEDFIALYHQAANEIPGSPIFIMKLAGRARHLEVQLLADQYGTNISLFGRDCSVQRRHQKIIEEAPVTIAKAETFHEMEKAAVRLGKLVGYVSAGTVEYLYSHDDGKFYFLELNPRLQVEHPTTEMVSGVNLPAAQLQIAMGIPMHRISDIRTLYGMNPHSASEIDFEFKTQDATKKQRRPIPKGHCTACRITSEDPNDGFKPSGGTLHELNFRSSSNVWGYFSVGNNGNIHSFSDSQFGHIFAFGENRQASRKHMVVALKELSIRGDFRTTVEYLIKLLETEDFEDNTITTGWLDDLITHKMTAEKPDPTLAVICGAATKAFLASEEARHKYIESLQKGQVLSKDLLQTMFPVDFIHEGKRYKFTVAKSGNDRYTLFINGSKCDIILRQLSDGGLLIAIGGKSHTIYWKEEVAATRLSVDSMTTLLEVENDPTQLRTPSPGKLVKFLVENGEHIIKGQPYAEIEVMKMQMPLVSQENGIVQLLKQPGSTIVAGDIMAIMTLDDPSKVKHALPFEGMLPDFGSPVIEGTKPAYKFKSLVSTLENILKGYDNQVIMNASLQQLIEVLRNPKLPYSEWKLHISALHSRLPAKLDEQMEELVARSLRRGAVFPARQLSKLIDMAVKNPEYNPDKLLGAVVEPLADIAHKYSNGLEAHEHSIFVHFLEEYYEVEKLFNGPNVREENIILKLRDENPKDLDKVALTVLSHSKVSAKNNLILAILKHYQPLCKLSSKVSAIFSTPLQHIVELESKATAKVALQAREILIQGALPSVKERTEQIEHILKSSVVKVAYGSSNPKRSEPDLNILKDLIDSNYVVFDVLLQFLTHQDPVVTAAAAQVYIRRAYRAYTIGDIRVHEGVTVPIVEWKFQLPSAAFSTFPTVKSKMGMNRAVSVSDLSYVANSQSSPLREGILMAVDHLDDVDEILSQSLEVIPRHQSSSNGPAPDRSGSSASLSNVANVCVASTEGFESEEEILVRLREILDLNKQELINASIRRITFMFGFKDGSYPKYYTFNGPNYNENETIRHIEPALAFQLELGRLSNFNIKPIFTDNRNIHVYEAVSKTSPLDKRFFTRGIIRTGHIRDDISIQEYLTSEANRLMSDILDNLEVTDTSNSDLNHIFINFIAVFDISPEDVEAAFGGFLERFGKRLLRLRVSSAEIRIIIKDPQTGAPVPLRALINNVSGYVIKTEMYTEVKNAKGEWVFKSLGKPGSMHLRPIATPYPVKEWLQPKRYKAHLMGTTYVYDFPELFRQASSSQWKNFSADVKLTDDFFISNELIEDENGELTEVEREPGANAIGMVAFKITVKTPEYPRGRQFVVVANDITFKIGSFGPQEDEFFNKVTEYARKRGIPRIYLAANSGARIGMAEEIVPLFQVAWNDAANPDKGFQYLYLTSEGMETLKKFDKENSVLTERTVINGEERFVIKTIIGSEDGLGVECLRGSGLIAGATSRAYHDIFTITLVTCRSVGIGAYLVRLGQRAIQVEGQPIILTGAPAINKMLGREVYTSNLQLGGTQIMYNNGVSHLTAVDDLAGVEKIVEWMSYVPAKRNMPVPILETKDTWDRPVDFTPTNDETYDVRWMIEGRETESGFEYGLFDKGSFFETLSGWAKGVVVGRARLGGIPLGVIGVETRTVENLIPADPANPNSAETLIQEPGQVWHPNSAFKTAQAINDFNNGEQLPMMILANWRGFSGGQRDMFNEVLKYGSFIVDALVDYKQPIIIYIPPTGELRGGSWVVVDPTINADQMEMYADVNARAGVLEPQGMVGIKFRREKLLDTMNRLDDKYRELRSQLSNKSLAPEVHQQISKQLADRERELLPIYGQISLQFADLHDRSSRMVAKGVISKELEWTEARRFFFWRLRRRLNEEYLIKRLSHQVGEASRLEKIARIRSWYPASVDHEDDRQVATWIEENYKTLDDKLKGLKLESFAQDLAKKIRSDHDNAIDGLSEVIKMLSTDDKEKLLKTLK.

Residue Ser2 is modified to N-acetylserine. Ser2 carries the post-translational modification Phosphoserine. Residues 58–567 form the Biotin carboxylation domain; it reads VISKILIANN…TTGWLDDLIT (510 aa). An ATP-grasp domain is found at 216 to 408; that stretch reads KTGLVSVDDD…LPAAQLQIAM (193 aa). Position 256 to 261 (256 to 261) interacts with ATP; it reads GGGGKG. Mn(2+) is bound by residues Glu365, Glu379, and Asn381. Residue Arg383 is part of the active site. One can recognise a Biotinyl-binding domain in the interval 694–768; it reads LEVENDPTQL…VAGDIMAIMT (75 aa). N6-biotinyllysine is present on Lys735. Ser790, Ser1148, Ser1157, and Ser1162 each carry phosphoserine. The CoA carboxyltransferase N-terminal domain maps to 1486 to 1822; that stretch reads PYPVKEWLQP…KRNMPVPILE (337 aa). The segment at 1486 to 2141 is carboxyltransferase; that stretch reads PYPVKEWLQP…EEYLIKRLSH (656 aa). Residue 1627 to 1629 participates in acetyl-CoA binding; it reads ARI. Arg1731 contacts CoA. Positions 1826 to 2141 constitute a CoA carboxyltransferase C-terminal domain; that stretch reads TWDRPVDFTP…EEYLIKRLSH (316 aa). Gly1998 is a binding site for acetyl-CoA. CoA-binding residues include Lys2034 and Arg2036.

As to quaternary structure, homodimer. It depends on biotin as a cofactor. The cofactor is Mn(2+).

The protein localises to the cytoplasm. Its subcellular location is the endoplasmic reticulum membrane. It catalyses the reaction hydrogencarbonate + acetyl-CoA + ATP = malonyl-CoA + ADP + phosphate + H(+). The enzyme catalyses N(6)-biotinyl-L-lysyl-[protein] + hydrogencarbonate + ATP = N(6)-carboxybiotinyl-L-lysyl-[protein] + ADP + phosphate + H(+). It functions in the pathway lipid metabolism; malonyl-CoA biosynthesis; malonyl-CoA from acetyl-CoA: step 1/1. By phosphorylation. The catalytic activity is inhibited by soraphen A, a polyketide isolated from the myxobacterium Sorangium cellulosum and a potent inhibitor of fungal growth. Its function is as follows. Carries out three functions: biotin carboxyl carrier protein, biotin carboxylase and carboxyltransferase. Involved in the synthesis of very-long-chain fatty acid synthesis which is required to maintain a functional nuclear envelope. Required for acylation and vacuolar membrane association of VAC8 which is necessary to maintain a normal morphology of the vacuole. This Saccharomyces cerevisiae (strain ATCC 204508 / S288c) (Baker's yeast) protein is Acetyl-CoA carboxylase (ACC1).